Reading from the N-terminus, the 328-residue chain is V-type sodium ATPase subunit C (328 aa).

It belongs to the V-ATPase V0D/AC39 subunit family.

Its function is as follows. Involved in ATP-driven sodium extrusion. In Enterococcus hirae (strain ATCC 9790 / DSM 20160 / JCM 8729 / LMG 6399 / NBRC 3181 / NCIMB 6459 / NCDO 1258 / NCTC 12367 / WDCM 00089 / R), this protein is V-type sodium ATPase subunit C (ntpC).